Reading from the N-terminus, the 185-residue chain is Ribosome-recycling factor (185 aa).

The protein belongs to the RRF family.

The protein localises to the cytoplasm. Its function is as follows. Responsible for the release of ribosomes from messenger RNA at the termination of protein biosynthesis. May increase the efficiency of translation by recycling ribosomes from one round of translation to another. The chain is Ribosome-recycling factor from Campylobacter fetus subsp. fetus (strain 82-40).